Here is a 192-residue protein sequence, read N- to C-terminus: Probable GTP-binding protein EngB (192 aa).

The EngB-type G domain maps to 22 to 192 (SLPEIVFVGR…LLEQLENYTG (171 aa)). GTP contacts are provided by residues 30-37 (GRSNVGKS), 57-61 (GKTQL), 75-78 (DLPG), 142-145 (TKYD), and 172-174 (YSA). Positions 37 and 59 each coordinate Mg(2+).

Belongs to the TRAFAC class TrmE-Era-EngA-EngB-Septin-like GTPase superfamily. EngB GTPase family. Mg(2+) is required as a cofactor.

Functionally, necessary for normal cell division and for the maintenance of normal septation. This Prosthecochloris aestuarii (strain DSM 271 / SK 413) protein is Probable GTP-binding protein EngB.